Here is a 156-residue protein sequence, read N- to C-terminus: ATP synthase subunit b', chloroplastic (156 aa).

A helical membrane pass occupies residues 24 to 44 (ATLPLVAIQFILLMVTLNIIL).

Belongs to the ATPase B chain family. F-type ATPases have 2 components, F(1) - the catalytic core - and F(0) - the membrane proton channel. F(1) has five subunits: alpha(3), beta(3), gamma(1), delta(1), epsilon(1). F(0) has four main subunits: a(1), b(1), b'(1) and c(10-14). The alpha and beta chains form an alternating ring which encloses part of the gamma chain. F(1) is attached to F(0) by a central stalk formed by the gamma and epsilon chains, while a peripheral stalk is formed by the delta, b and b' chains.

Its subcellular location is the plastid. The protein resides in the chloroplast thylakoid membrane. In terms of biological role, f(1)F(0) ATP synthase produces ATP from ADP in the presence of a proton or sodium gradient. F-type ATPases consist of two structural domains, F(1) containing the extramembraneous catalytic core and F(0) containing the membrane proton channel, linked together by a central stalk and a peripheral stalk. During catalysis, ATP synthesis in the catalytic domain of F(1) is coupled via a rotary mechanism of the central stalk subunits to proton translocation. Its function is as follows. Component of the F(0) channel, it forms part of the peripheral stalk, linking F(1) to F(0). The b'-subunit is a diverged and duplicated form of b found in plants and photosynthetic bacteria. The protein is ATP synthase subunit b', chloroplastic of Thalassiosira pseudonana (Marine diatom).